A 294-amino-acid polypeptide reads, in one-letter code: Small ribosomal subunit biogenesis GTPase RsgA 2, mitochondrial (294 aa).

The transit peptide at 1–68 (MQTFSSAAAL…RSFLAPVLPL (68 aa)) directs the protein to the mitochondrion. Positions 155 to 294 (VSEVLDPPVA…VSFFLSYFIL (140 aa)) constitute a CP-type G domain. Position 255-263 (255-263 (GPSGVGKSS)) interacts with GTP.

This sequence belongs to the TRAFAC class YlqF/YawG GTPase family.

The protein localises to the mitochondrion. In Arabidopsis thaliana (Mouse-ear cress), this protein is Small ribosomal subunit biogenesis GTPase RsgA 2, mitochondrial.